A 188-amino-acid chain; its full sequence is Probable chemoreceptor glutamine deamidase CheD (188 aa).

This sequence belongs to the CheD family.

It carries out the reaction L-glutaminyl-[protein] + H2O = L-glutamyl-[protein] + NH4(+). Probably deamidates glutamine residues to glutamate on methyl-accepting chemotaxis receptors (MCPs), playing an important role in chemotaxis. The protein is Probable chemoreceptor glutamine deamidase CheD of Caulobacter sp. (strain K31).